Here is a 201-residue protein sequence, read N- to C-terminus: Adenylyl-sulfate kinase (201 aa).

Residues 1–23 (MALHDENVVWHSHPVTPQQREQH) form a disordered region. 35 to 42 (GLSGSGKS) provides a ligand contact to ATP. Ser109 acts as the Phosphoserine intermediate in catalysis.

Belongs to the APS kinase family.

It carries out the reaction adenosine 5'-phosphosulfate + ATP = 3'-phosphoadenylyl sulfate + ADP + H(+). It functions in the pathway sulfur metabolism; hydrogen sulfide biosynthesis; sulfite from sulfate: step 2/3. Functionally, catalyzes the synthesis of activated sulfate. The chain is Adenylyl-sulfate kinase from Escherichia coli O6:K15:H31 (strain 536 / UPEC).